The following is a 311-amino-acid chain: Bifunctional protein FolD (311 aa).

Residue 174–176 coordinates NADP(+); that stretch reads GKG.

This sequence belongs to the tetrahydrofolate dehydrogenase/cyclohydrolase family. As to quaternary structure, homodimer.

The enzyme catalyses (6R)-5,10-methylene-5,6,7,8-tetrahydrofolate + NADP(+) = (6R)-5,10-methenyltetrahydrofolate + NADPH. The catalysed reaction is (6R)-5,10-methenyltetrahydrofolate + H2O = (6R)-10-formyltetrahydrofolate + H(+). Its pathway is one-carbon metabolism; tetrahydrofolate interconversion. Functionally, catalyzes the oxidation of 5,10-methylenetetrahydrofolate to 5,10-methenyltetrahydrofolate and then the hydrolysis of 5,10-methenyltetrahydrofolate to 10-formyltetrahydrofolate. This is Bifunctional protein FolD from Pyrobaculum islandicum (strain DSM 4184 / JCM 9189 / GEO3).